The following is a 344-amino-acid chain: Uroporphyrinogen decarboxylase (344 aa).

Residues 25 to 29 (RQAGR), aspartate 75, tyrosine 152, serine 207, and histidine 323 each bind substrate.

It belongs to the uroporphyrinogen decarboxylase family. As to quaternary structure, homodimer.

It is found in the cytoplasm. The enzyme catalyses uroporphyrinogen III + 4 H(+) = coproporphyrinogen III + 4 CO2. Its pathway is porphyrin-containing compound metabolism; protoporphyrin-IX biosynthesis; coproporphyrinogen-III from 5-aminolevulinate: step 4/4. Functionally, catalyzes the decarboxylation of four acetate groups of uroporphyrinogen-III to yield coproporphyrinogen-III. This is Uroporphyrinogen decarboxylase from Roseobacter denitrificans (strain ATCC 33942 / OCh 114) (Erythrobacter sp. (strain OCh 114)).